A 166-amino-acid chain; its full sequence is Large ribosomal subunit protein uL10 (166 aa).

The protein belongs to the universal ribosomal protein uL10 family. Part of the ribosomal stalk of the 50S ribosomal subunit. The N-terminus interacts with L11 and the large rRNA to form the base of the stalk. The C-terminus forms an elongated spine to which L12 dimers bind in a sequential fashion forming a multimeric L10(L12)X complex.

In terms of biological role, forms part of the ribosomal stalk, playing a central role in the interaction of the ribosome with GTP-bound translation factors. This chain is Large ribosomal subunit protein uL10, found in Streptococcus uberis (strain ATCC BAA-854 / 0140J).